The primary structure comprises 253 residues: 1-(5-phosphoribosyl)-5-[(5-phosphoribosylamino)methylideneamino] imidazole-4-carboxamide isomerase (253 aa).

The Proton acceptor role is filled by D19. The active-site Proton donor is the D141.

Belongs to the HisA/HisF family.

Its subcellular location is the cytoplasm. The catalysed reaction is 1-(5-phospho-beta-D-ribosyl)-5-[(5-phospho-beta-D-ribosylamino)methylideneamino]imidazole-4-carboxamide = 5-[(5-phospho-1-deoxy-D-ribulos-1-ylimino)methylamino]-1-(5-phospho-beta-D-ribosyl)imidazole-4-carboxamide. Its pathway is amino-acid biosynthesis; L-histidine biosynthesis; L-histidine from 5-phospho-alpha-D-ribose 1-diphosphate: step 4/9. The polypeptide is 1-(5-phosphoribosyl)-5-[(5-phosphoribosylamino)methylideneamino] imidazole-4-carboxamide isomerase (Rhodopirellula baltica (strain DSM 10527 / NCIMB 13988 / SH1)).